The primary structure comprises 310 residues: Iron ABC transporter substrate-binding lipoprotein MtsA (310 aa).

An N-terminal signal peptide occupies residues 1-20 (MGKRMSLILGAFLSVFLLVA). The N-palmitoyl cysteine moiety is linked to residue Cys-21. The S-diacylglycerol cysteine moiety is linked to residue Cys-21. Residues His-68, His-140, Glu-206, and Asp-281 each contribute to the Fe(2+) site.

It belongs to the bacterial solute-binding protein 9 family. Lipoprotein receptor antigen (Lrai) subfamily.

The protein resides in the cell membrane. Functionally, part of the ATP-binding cassette (ABC) transport system MtsABC involved in iron import. Binds iron with high affinity and specificity and delivers it to the membrane permease for translocation into the cytoplasm. Has low affinity for Zn(2+) and Cu(2+). The polypeptide is Iron ABC transporter substrate-binding lipoprotein MtsA (mtsA) (Streptococcus pyogenes serotype M1).